A 656-amino-acid polypeptide reads, in one-letter code: Chaperone protein HtpG (656 aa).

An a; substrate-binding region spans residues 1–359 (MSAQVEQLEF…AEDMSLNVSR (359 aa)). Residues 360 to 575 (EILQQNRQIN…AFGITPALAR (216 aa)) form a b region. The interval 576–656 (IYRASGQDVP…LLADLLSRSM (81 aa)) is c.

This sequence belongs to the heat shock protein 90 family. As to quaternary structure, homodimer.

It localises to the cytoplasm. Functionally, molecular chaperone. Has ATPase activity. In Mycobacterium leprae (strain TN), this protein is Chaperone protein HtpG.